The primary structure comprises 146 residues: MIALLQRVNKASVEVGGETISEIGKGILIFLGIDKKDSKKDVEYLADKVVNLRIFEDNNSKMNLSIKDVGGEIMVVSEFTLAGDCKKGNRPSFDKAMPPEEAEKLYRDFIDSLRSKGIPVKEGVFRSFMHVSLINEGPVTFILNTR.

Positions 137–138 match the Gly-cisPro motif, important for rejection of L-amino acids motif; the sequence is GP.

This sequence belongs to the DTD family. In terms of assembly, homodimer.

It is found in the cytoplasm. The enzyme catalyses glycyl-tRNA(Ala) + H2O = tRNA(Ala) + glycine + H(+). It carries out the reaction a D-aminoacyl-tRNA + H2O = a tRNA + a D-alpha-amino acid + H(+). Functionally, an aminoacyl-tRNA editing enzyme that deacylates mischarged D-aminoacyl-tRNAs. Also deacylates mischarged glycyl-tRNA(Ala), protecting cells against glycine mischarging by AlaRS. Acts via tRNA-based rather than protein-based catalysis; rejects L-amino acids rather than detecting D-amino acids in the active site. By recycling D-aminoacyl-tRNA to D-amino acids and free tRNA molecules, this enzyme counteracts the toxicity associated with the formation of D-aminoacyl-tRNA entities in vivo and helps enforce protein L-homochirality. The polypeptide is D-aminoacyl-tRNA deacylase (Thermodesulfovibrio yellowstonii (strain ATCC 51303 / DSM 11347 / YP87)).